The following is a 528-amino-acid chain: Beta-hexosaminidase subunit alpha (528 aa).

The signal sequence occupies residues methionine 1–alanine 22. A propeptide spanning residues leucine 23 to glutamine 88 is cleaved from the precursor. An intrachain disulfide couples cysteine 58 to cysteine 104. Residues asparagine 115, asparagine 157, and asparagine 295 are each glycosylated (N-linked (GlcNAc...) asparagine). Cysteines 277 and 328 form a disulfide. Glutamate 323 serves as the catalytic Proton donor. The interval asparagine 422–arginine 423 is critical for hydrolysis GM2 gangliosides. Residue asparagine 487 is glycosylated (N-linked (GlcNAc...) asparagine). A disulfide bridge links cysteine 504 with cysteine 521.

The protein belongs to the glycosyl hydrolase 20 family. As to quaternary structure, there are 3 beta-hexosaminidase isozymes: isozyme A (hexosaminidase A) is a heterodimer composed of one subunit alpha and one subunit beta (chain A and B); isozyme B (hexosaminidase B) is a homodimer of two beta subunits (two chains A and B); isozyme S (hexosaminidase S) is a homodimer of two alpha subunits. The composition of the dimer (isozyme A versus isozyme S) has a significant effect on the substrate specificity of the alpha subunit active site.

It localises to the lysosome. It carries out the reaction Hydrolysis of terminal non-reducing N-acetyl-D-hexosamine residues in N-acetyl-beta-D-hexosaminides.. It catalyses the reaction N-acetyl-beta-D-galactosaminyl-(1-&gt;4)-beta-D-3-sulfogalactosyl-(1-&gt;4)-beta-D-glucosyl-(1&lt;-&gt;1')-ceramide + H2O = a beta-D-3-sulfogalactosyl-(1-&gt;4)-beta-D-glucosyl-(1&lt;-&gt;1')-ceramide + N-acetyl-beta-D-galactosamine. The enzyme catalyses a ganglioside GM2 (d18:1(4E)) + H2O = a ganglioside GM3 (d18:1(4E)) + N-acetyl-beta-D-galactosamine. The catalysed reaction is a ganglioside GM2 + H2O = a ganglioside GM3 + N-acetyl-beta-D-galactosamine. It carries out the reaction beta-D-GalNAc-(1-&gt;4)-alpha-L-IdoA-(1-&gt;3)-beta-D-GalNAc-4-sulfate-(1-&gt;4)-alpha-L-IdoA-(1-&gt;3)-D-GalNAc-4-sulfate + H2O = alpha-L-IdoA-(1-&gt;3)-beta-D-GalNAc-4-sulfate-(1-&gt;4)-alpha-L-IdoA-(1-&gt;3)-D-GalNAc-4-sulfate + N-acetyl-D-galactosamine. It catalyses the reaction N-acetyl-beta-D-6-sulfogalactosaminyl-(1-&gt;4)-alpha-L-iduronyl-(1-&gt;3)-N-acetyl-D-6-sulfogalactosamine + H2O = alpha-L-iduronyl-(1-&gt;3)-N-acetyl-D-6-sulfogalactosamine + N-acetyl-D-6-sulfogalactosamine. Addition of GM2A stimulates the hydrolysis of sulfated glycosphingolipid SM2 and the ganglioside GM2. Hydrolyzes the non-reducing end N-acetyl-D-hexosamine and/or sulfated N-acetyl-D-hexosamine of glycoconjugates, such as the oligosaccharide moieties from proteins and neutral glycolipids, or from certain mucopolysaccharides. The isozyme S is as active as the isozyme A on the anionic bis-sulfated glycans, the chondroitin-6-sulfate trisaccharide (C6S-3), and the dermatan sulfate pentasaccharide, and the sulfated glycosphingolipid SM2. The isozyme B does not hydrolyze each of these substrates, however hydrolyzes efficiently neutral oligosaccharide. Only the isozyme A is responsible for the degradation of GM2 gangliosides in the presence of GM2A. This Rattus norvegicus (Rat) protein is Beta-hexosaminidase subunit alpha.